The chain runs to 132 residues: Small ribosomal subunit protein uS8 (132 aa).

The protein belongs to the universal ribosomal protein uS8 family. In terms of assembly, part of the 30S ribosomal subunit. Contacts proteins S5 and S12.

Functionally, one of the primary rRNA binding proteins, it binds directly to 16S rRNA central domain where it helps coordinate assembly of the platform of the 30S subunit. The protein is Small ribosomal subunit protein uS8 of Christiangramia forsetii (strain DSM 17595 / CGMCC 1.15422 / KT0803) (Gramella forsetii).